Here is a 693-residue protein sequence, read N- to C-terminus: Bacterial dynamin-like protein (693 aa).

The Cytoplasmic segment spans residues 1–521 (MVNQVATDRF…DNSPGWAKWA (521 aa)). Residues 66–313 (QQGVFRLLVL…QADLDGTGFP (248 aa)) form the Dynamin-type G domain. Positions 76 to 83 (GDMKRGKS) are G1 motif. GTP is bound at residue 79–84 (KRGKST). The tract at residues 102 to 103 (CT) is G2 motif. The tract at residues 180–183 (DSPG) is G3 motif. 235 to 241 (FLVNAWD) contributes to the GTP binding site. Positions 238–241 (NAWD) are G4 motif. Residue Asn-268 is a region of interest, G5 motif. 292-293 (SI) is a binding site for GTP. The tract at residues 311-571 (GFPKFMDSLN…TAVTGILLGP (261 aa)) is middle domain. Positions 347–378 (REAVARRIPLLEQDVNELKKRIDSVEPEFNKL) form a coiled coil. The stretch at 522-574 (MGLLSLSKGNLAGFALAGAGFDWKNILLNYFTVIGIGGIITAVTGILLGPIGF) is an intramembrane region. A paddle domain region spans residues 572–606 (IGFALLGLGVGFLQADQARRELVKTAKKELVKHLP). Residues 575–693 (ALLGLGVGFL…AYSNLLAYYS (119 aa)) lie on the Cytoplasmic side of the membrane. Residues 607–693 (QVAHEQSQVV…AYSNLLAYYS (87 aa)) form a GED region. The stretch at 661–688 (ESEFNRLKNLQEDVIAQLQKIEAAYSNL) forms a coiled coil.

It belongs to the TRAFAC class dynamin-like GTPase superfamily. Dynamin/Fzo/YdjA family. Mitofusin subfamily. As to quaternary structure, homodimer. Self-assembles in the presence of GMP-PNP and liposomes, and probably also in the presence of GTP.

It is found in the cell inner membrane. The catalysed reaction is GTP + H2O = GDP + phosphate + H(+). Functionally, dynamin-related GTPase probably involved in membrane remodeling. Lipid and nucleotide-binding are thought to induce a large intramolecular rearrangement, leading to assembly on lipid bilayers and possible membrane curving. In the presence of the non-hydrolyzable GTP analog GMP-PNP self-assembles on a lipid bilayer; this does not stimulate subsequent GTPase activity. Does not bind lipids in the presence of GDP; perhaps GTP hydrolysis disrupts membrane-binding. This chain is Bacterial dynamin-like protein, found in Nostoc punctiforme (strain ATCC 29133 / PCC 73102).